Reading from the N-terminus, the 120-residue chain is Purkinje cell protein 2 (120 aa).

2 consecutive GoLoco domains span residues 7 to 29 (QEGF…RCSL) and 47 to 69 (MDNL…RVTV). A disordered region spans residues 16-120 (HVQGDRMEEQ…SSPQPQTQAP (105 aa)). A compositionally biased stretch (polar residues) spans 108-120 (RRNSSPQPQTQAP). Phosphoserine is present on serine 111.

As to expression, cerebellum (Purkinje cells) and retinal bipolar neurons.

May function as a cell-type specific modulator for G protein-mediated cell signaling. In Mus musculus (Mouse), this protein is Purkinje cell protein 2 (Pcp2).